Reading from the N-terminus, the 379-residue chain is Succinyl-diaminopimelate desuccinylase (379 aa).

Position 68 (His68) interacts with Zn(2+). Asp70 is a catalytic residue. Asp101 is a Zn(2+) binding site. Glu135 acts as the Proton acceptor in catalysis. Zn(2+) contacts are provided by Glu136, Glu164, and His350.

The protein belongs to the peptidase M20A family. DapE subfamily. As to quaternary structure, homodimer. Zn(2+) is required as a cofactor. Requires Co(2+) as cofactor.

It catalyses the reaction N-succinyl-(2S,6S)-2,6-diaminopimelate + H2O = (2S,6S)-2,6-diaminopimelate + succinate. The protein operates within amino-acid biosynthesis; L-lysine biosynthesis via DAP pathway; LL-2,6-diaminopimelate from (S)-tetrahydrodipicolinate (succinylase route): step 3/3. Its function is as follows. Catalyzes the hydrolysis of N-succinyl-L,L-diaminopimelic acid (SDAP), forming succinate and LL-2,6-diaminopimelate (DAP), an intermediate involved in the bacterial biosynthesis of lysine and meso-diaminopimelic acid, an essential component of bacterial cell walls. The protein is Succinyl-diaminopimelate desuccinylase of Bordetella bronchiseptica (strain ATCC BAA-588 / NCTC 13252 / RB50) (Alcaligenes bronchisepticus).